Consider the following 302-residue polypeptide: 4-hydroxy-tetrahydrodipicolinate synthase (302 aa).

Thr-55 contributes to the pyruvate binding site. Tyr-144 functions as the Proton donor/acceptor in the catalytic mechanism. Lys-172 serves as the catalytic Schiff-base intermediate with substrate. Residue Val-214 coordinates pyruvate.

This sequence belongs to the DapA family. As to quaternary structure, homotetramer; dimer of dimers.

It localises to the cytoplasm. The catalysed reaction is L-aspartate 4-semialdehyde + pyruvate = (2S,4S)-4-hydroxy-2,3,4,5-tetrahydrodipicolinate + H2O + H(+). It functions in the pathway amino-acid biosynthesis; L-lysine biosynthesis via DAP pathway; (S)-tetrahydrodipicolinate from L-aspartate: step 3/4. Catalyzes the condensation of (S)-aspartate-beta-semialdehyde [(S)-ASA] and pyruvate to 4-hydroxy-tetrahydrodipicolinate (HTPA). The chain is 4-hydroxy-tetrahydrodipicolinate synthase from Synechococcus sp. (strain WH7803).